The sequence spans 173 residues: FMN reductase (NADH) RutF 2 (173 aa).

This sequence belongs to the non-flavoprotein flavin reductase family. RutF subfamily.

It catalyses the reaction FMNH2 + NAD(+) = FMN + NADH + 2 H(+). Its function is as follows. Catalyzes the reduction of FMN to FMNH2 which is used to reduce pyrimidine by RutA via the Rut pathway. The sequence is that of FMN reductase (NADH) RutF 2 from Rhizobium rhizogenes (strain K84 / ATCC BAA-868) (Agrobacterium radiobacter).